We begin with the raw amino-acid sequence, 359 residues long: Protein FLX-like 2 (359 aa).

The span at 1-16 (MESKGRIHPSHHHMRR) shows a compositional bias: basic residues. Residues 1 to 27 (MESKGRIHPSHHHMRRPLPGPGGCIAH) are disordered. Residues 83–236 (HGSLRQELAA…EKLQAQLMNN (154 aa)) adopt a coiled-coil conformation. Residues 303–359 (TQPGYFPQRPGYNFPRGPPGSYDPTTRLPTGPYGAPFPPGPSNNTPYAGTHGNPSRR) form a disordered region.

Belongs to the FLX family. In terms of assembly, interacts with FRI.

Has no transcriptional activation activity. The chain is Protein FLX-like 2 (FLXL2) from Arabidopsis thaliana (Mouse-ear cress).